Here is a 321-residue protein sequence, read N- to C-terminus: Urease accessory protein UreD (321 aa).

This sequence belongs to the UreD family. UreD, UreF and UreG form a complex that acts as a GTP-hydrolysis-dependent molecular chaperone, activating the urease apoprotein by helping to assemble the nickel containing metallocenter of UreC. The UreE protein probably delivers the nickel.

It localises to the cytoplasm. Functionally, required for maturation of urease via the functional incorporation of the urease nickel metallocenter. In Photorhabdus laumondii subsp. laumondii (strain DSM 15139 / CIP 105565 / TT01) (Photorhabdus luminescens subsp. laumondii), this protein is Urease accessory protein UreD.